The chain runs to 117 residues: Large ribosomal subunit protein uL23 (117 aa).

This sequence belongs to the universal ribosomal protein uL23 family. Part of the 50S ribosomal subunit. Contacts protein L29, and trigger factor when it is bound to the ribosome.

Functionally, one of the early assembly proteins it binds 23S rRNA. One of the proteins that surrounds the polypeptide exit tunnel on the outside of the ribosome. Forms the main docking site for trigger factor binding to the ribosome. This Ruminiclostridium cellulolyticum (strain ATCC 35319 / DSM 5812 / JCM 6584 / H10) (Clostridium cellulolyticum) protein is Large ribosomal subunit protein uL23.